Here is a 417-residue protein sequence, read N- to C-terminus: Exodeoxyribonuclease 7 large subunit (417 aa).

Belongs to the XseA family. In terms of assembly, heterooligomer composed of large and small subunits.

The protein resides in the cytoplasm. The catalysed reaction is Exonucleolytic cleavage in either 5'- to 3'- or 3'- to 5'-direction to yield nucleoside 5'-phosphates.. Its function is as follows. Bidirectionally degrades single-stranded DNA into large acid-insoluble oligonucleotides, which are then degraded further into small acid-soluble oligonucleotides. This is Exodeoxyribonuclease 7 large subunit from Helicobacter hepaticus (strain ATCC 51449 / 3B1).